A 427-amino-acid polypeptide reads, in one-letter code: Piwi protein (427 aa).

Residues Pro38–Lys167 form a mid domain region. In terms of domain architecture, Piwi spans Gly110 to Arg406. The segment at Tyr118 to Tyr124 is binds 5'-phosphorylated end of guide DNA. A binds target DNA region spans residues Arg147–Asn148. The segment at Thr150–Asn155 is binds guide DNA. A divalent metal cation contacts are provided by Gln159 and Leu427. A PIWI domain region spans residues Pro168–Leu427.

It belongs to the argonaute family. Short pAgo subfamily. Homodimer probably stabilized by DNA. Each subunit is capable of interacting with a DNA molecule. A divalent metal cation is required as a cofactor.

Might play a role in defense against invading genetic elements, using short nucleic acid sequences as guides to bind complementary target strands, resulting in slicing of the target nucleic acid. Binds nucleic acids with decreasing affinity in the following order; ssDNA, ssRNA, dsDNA, RNA-DNA, RNA-RNA. Association of the 5' seed region of the guide strand (nucleotides 2-7) with AfPiwi increases affinity for the corresponding target strand; the greatest increase in affinity is for guide DNA with target RNA. This is Piwi protein from Archaeoglobus fulgidus (strain ATCC 49558 / DSM 4304 / JCM 9628 / NBRC 100126 / VC-16).